A 456-amino-acid chain; its full sequence is Sulfoacetaldehyde dehydrogenase (456 aa).

213–218 (GGTAAA) is a binding site for NAD(+). Residues Glu-233 and Cys-267 contribute to the active site.

Belongs to the aldehyde dehydrogenase family. As to quaternary structure, homotetramer.

The catalysed reaction is sulfoacetaldehyde + NAD(+) + H2O = sulfoacetate + NADH + 2 H(+). Mediates conversion of 2-sulfoacetaldehyde into sulfoacetate. The enzyme is specific for NAD; NADP is not a substrate. Part of a pathway that can utilize the amino group of taurine as a sole source of nitrogen for growth. The chain is Sulfoacetaldehyde dehydrogenase (safD) from Neptuniibacter caesariensis.